A 156-amino-acid polypeptide reads, in one-letter code: 6,7-dimethyl-8-ribityllumazine synthase (156 aa).

Residues F23, 57-59 (AFE), and 81-83 (TVI) contribute to the 5-amino-6-(D-ribitylamino)uracil site. 86-87 (ST) is a (2S)-2-hydroxy-3-oxobutyl phosphate binding site. H89 functions as the Proton donor in the catalytic mechanism. Residue F114 participates in 5-amino-6-(D-ribitylamino)uracil binding. Residue R128 coordinates (2S)-2-hydroxy-3-oxobutyl phosphate.

This sequence belongs to the DMRL synthase family. In terms of assembly, forms an icosahedral capsid composed of 60 subunits, arranged as a dodecamer of pentamers.

It carries out the reaction (2S)-2-hydroxy-3-oxobutyl phosphate + 5-amino-6-(D-ribitylamino)uracil = 6,7-dimethyl-8-(1-D-ribityl)lumazine + phosphate + 2 H2O + H(+). It participates in cofactor biosynthesis; riboflavin biosynthesis; riboflavin from 2-hydroxy-3-oxobutyl phosphate and 5-amino-6-(D-ribitylamino)uracil: step 1/2. Functionally, catalyzes the formation of 6,7-dimethyl-8-ribityllumazine by condensation of 5-amino-6-(D-ribitylamino)uracil with 3,4-dihydroxy-2-butanone 4-phosphate. This is the penultimate step in the biosynthesis of riboflavin. In Halalkalibacterium halodurans (strain ATCC BAA-125 / DSM 18197 / FERM 7344 / JCM 9153 / C-125) (Bacillus halodurans), this protein is 6,7-dimethyl-8-ribityllumazine synthase.